An 822-amino-acid chain; its full sequence is Probable phosphoketolase (822 aa).

Belongs to the XFP family. It depends on thiamine diphosphate as a cofactor.

This Lactococcus lactis subsp. lactis (strain IL1403) (Streptococcus lactis) protein is Probable phosphoketolase.